A 194-amino-acid polypeptide reads, in one-letter code: Molybdenum cofactor guanylyltransferase (194 aa).

GTP is bound by residues 12-14 (LAG), K25, N53, D70, and D100. Mg(2+) is bound at residue D100.

It belongs to the MobA family. As to quaternary structure, monomer. Mg(2+) serves as cofactor.

It localises to the cytoplasm. It carries out the reaction Mo-molybdopterin + GTP + H(+) = Mo-molybdopterin guanine dinucleotide + diphosphate. In terms of biological role, transfers a GMP moiety from GTP to Mo-molybdopterin (Mo-MPT) cofactor (Moco or molybdenum cofactor) to form Mo-molybdopterin guanine dinucleotide (Mo-MGD) cofactor. This is Molybdenum cofactor guanylyltransferase from Aliivibrio fischeri (strain ATCC 700601 / ES114) (Vibrio fischeri).